The following is a 587-amino-acid chain: MFS-type transporter opaD (587 aa).

The next 9 membrane-spanning stretches (helical) occupy residues 87 to 107 (VAIMIALCLAVLCMALDNTIL), 124 to 146 (MGWYVSAYMLAQSSMTLVYGKLL), 153 to 173 (WVYIAALLLFEGGSLICGVSP), 184 to 204 (ISGTGGSGILVSSFLIVTIIV), 214 to 234 (GILSSLYAISGVFGPLLGGAF), 242 to 262 (WCFYINLPVGGVTGFFILLLF), 284 to 304 (IIGLFLFIPALVSLLLVLQWG), 315 to 335 (IIALIAVFGVTILAFAAVEYW), and 357 to 377 (LFTFCLSGSVIIFNYYLPIWF). Residue asparagine 382 is glycosylated (N-linked (GlcNAc...) asparagine). Transmembrane regions (helical) follow at residues 393–413 (IPLILAVALTSILSGWAVTTL), 414–434 (GYYIPFMYATPVIASVGAGLL), 447–467 (IGFQILYGIGVGLGFGLPLVV), 483–503 (LVTLTQGLAGALFNFVAQSVF), and 554–574 (VYLVGAALAAAALLGVVPIRW).

The protein belongs to the major facilitator superfamily. TCR/Tet family.

It localises to the membrane. Its function is as follows. MFS-type transporter; part of the gene cluster that mediates the biosynthesis of oxepinamides, derivatives of anthranilyl-containing tripeptides that share an oxepin ring and a fused pyrimidinone moiety. The chain is MFS-type transporter opaD from Aspergillus ustus.